An 85-amino-acid chain; its full sequence is U4-theraphotoxin-Hhn1u (85 aa).

The N-terminal stretch at 1 to 22 is a signal peptide; the sequence is MKMTLIAILTCAAVLVLHTTAA. A propeptide spanning residues 23 to 48 is cleaved from the precursor; the sequence is EELEAESQLMEVGMPDTELEAVDEER. 3 disulfides stabilise this stretch: cysteine 52-cysteine 66, cysteine 56-cysteine 77, and cysteine 71-cysteine 82.

It belongs to the neurotoxin 12 (Hwtx-2) family. 02 (Hwtx-2) subfamily. As to expression, expressed by the venom gland.

It localises to the secreted. Functionally, postsynaptic neurotoxin. This is U4-theraphotoxin-Hhn1u from Cyriopagopus hainanus (Chinese bird spider).